Consider the following 207-residue polypeptide: LPS-assembly lipoprotein LptE (207 aa).

Residues 1-19 form the signal peptide; sequence MRHRILMLLLGLAVLVTAG. The N-palmitoyl cysteine moiety is linked to residue Cys-20. Cys-20 carries the S-diacylglycerol cysteine lipid modification.

Belongs to the LptE lipoprotein family. As to quaternary structure, component of the lipopolysaccharide transport and assembly complex. Interacts with LptD.

The protein resides in the cell outer membrane. Its function is as follows. Together with LptD, is involved in the assembly of lipopolysaccharide (LPS) at the surface of the outer membrane. Required for the proper assembly of LptD. Binds LPS and may serve as the LPS recognition site at the outer membrane. This chain is LPS-assembly lipoprotein LptE, found in Yersinia enterocolitica serotype O:8 / biotype 1B (strain NCTC 13174 / 8081).